The following is a 341-amino-acid chain: Malate dehydrogenase 1, mitochondrial (341 aa).

Residues 1–22 (MFRSMLVRSSASAKQAVIRRSF) constitute a mitochondrion transit peptide. Residues 36 to 42 (GAAGGIG) and D62 each bind NAD(+). Substrate contacts are provided by R109 and R115. Residues N122 and 145-147 (ISN) contribute to the NAD(+) site. Substrate-binding residues include N147 and R181. Catalysis depends on H205, which acts as the Proton acceptor. Position 256 (M256) interacts with NAD(+).

Belongs to the LDH/MDH superfamily. MDH type 1 family. Homodimer. In terms of processing, forms intramolecular disulfide bonds. As to expression, expressed in rosette leaves.

It is found in the mitochondrion matrix. It catalyses the reaction (S)-malate + NAD(+) = oxaloacetate + NADH + H(+). With respect to regulation, negatively regulated by ATP. Not redox-regulated. The formation of intramolecular disulfide bonds does not alter enzymatic activity. Functionally, catalyzes a reversible NAD-dependent dehydrogenase reaction involved in central metabolism and redox homeostasis between organelle compartments. Required for carbon dioxide and energy partitioning in leaves. May limit photorespiration during the dark phase. Its activity is essential to shuttle reductants out from the mitochondria to support the photorespiratory flux. Can convert 2-oxoglutarate to (S)-2-hydroxyglutarate in vitro. In Arabidopsis thaliana (Mouse-ear cress), this protein is Malate dehydrogenase 1, mitochondrial.